The chain runs to 336 residues: Tryptophan--tRNA ligase (336 aa).

ATP contacts are provided by residues 16 to 18 and 24 to 25; these read QPT and GN. Residues 17–25 carry the 'HIGH' region motif; it reads PTGQLHLGN. Aspartate 140 contacts L-tryptophan. Residues 152–154, valine 191, and 200–204 each bind ATP; these read GED and KMSKS. The 'KMSKS' region signature appears at 200-204; it reads KMSKS.

It belongs to the class-I aminoacyl-tRNA synthetase family. In terms of assembly, homodimer.

It localises to the cytoplasm. The catalysed reaction is tRNA(Trp) + L-tryptophan + ATP = L-tryptophyl-tRNA(Trp) + AMP + diphosphate + H(+). Functionally, catalyzes the attachment of tryptophan to tRNA(Trp). In Gloeobacter violaceus (strain ATCC 29082 / PCC 7421), this protein is Tryptophan--tRNA ligase.